Here is a 430-residue protein sequence, read N- to C-terminus: Enolase (430 aa).

Q163 is a binding site for (2R)-2-phosphoglycerate. The Proton donor role is filled by E205. Mg(2+)-binding residues include D242, E287, and D314. (2R)-2-phosphoglycerate contacts are provided by K339, R368, S369, and K390. The Proton acceptor role is filled by K339.

This sequence belongs to the enolase family. Mg(2+) serves as cofactor.

It localises to the cytoplasm. It is found in the secreted. Its subcellular location is the cell surface. It carries out the reaction (2R)-2-phosphoglycerate = phosphoenolpyruvate + H2O. Its pathway is carbohydrate degradation; glycolysis; pyruvate from D-glyceraldehyde 3-phosphate: step 4/5. In terms of biological role, catalyzes the reversible conversion of 2-phosphoglycerate (2-PG) into phosphoenolpyruvate (PEP). It is essential for the degradation of carbohydrates via glycolysis. This is Enolase from Bacillus pumilus (strain SAFR-032).